Here is a 135-residue protein sequence, read N- to C-terminus: MNNLFVLVIIIVLSAGSNNGSKLFPKNQLYFRNSFNRNYDILTVHCKSDKDDLGIHTVARSYVYFFKFGDSIFGDTEIVCTLNHGVSATKYKVTFTAYKESRFVIRFGAIKIWEARDDGIYLTDEDHDAVKMYGW.

The signal sequence occupies residues 1 to 20; it reads MNNLFVLVIIIVLSAGSNNG.

This sequence belongs to the plant self-incompatibility (S1) protein family.

The protein resides in the secreted. The sequence is that of S-protein homolog 7 from Arabidopsis thaliana (Mouse-ear cress).